The following is a 159-amino-acid chain: ATP synthase subunit b (159 aa).

A helical transmembrane segment spans residues 2–22 (EFNLVTIGFTIVNFIILMLIL).

It belongs to the ATPase B chain family. As to quaternary structure, F-type ATPases have 2 components, F(1) - the catalytic core - and F(0) - the membrane proton channel. F(1) has five subunits: alpha(3), beta(3), gamma(1), delta(1), epsilon(1). F(0) has three main subunits: a(1), b(2) and c(10-14). The alpha and beta chains form an alternating ring which encloses part of the gamma chain. F(1) is attached to F(0) by a central stalk formed by the gamma and epsilon chains, while a peripheral stalk is formed by the delta and b chains.

It localises to the cell membrane. Its function is as follows. F(1)F(0) ATP synthase produces ATP from ADP in the presence of a proton or sodium gradient. F-type ATPases consist of two structural domains, F(1) containing the extramembraneous catalytic core and F(0) containing the membrane proton channel, linked together by a central stalk and a peripheral stalk. During catalysis, ATP synthesis in the catalytic domain of F(1) is coupled via a rotary mechanism of the central stalk subunits to proton translocation. In terms of biological role, component of the F(0) channel, it forms part of the peripheral stalk, linking F(1) to F(0). In Clostridium acetobutylicum (strain ATCC 824 / DSM 792 / JCM 1419 / IAM 19013 / LMG 5710 / NBRC 13948 / NRRL B-527 / VKM B-1787 / 2291 / W), this protein is ATP synthase subunit b.